We begin with the raw amino-acid sequence, 325 residues long: Elongation factor P--(R)-beta-lysine ligase (325 aa).

76 to 78 is a binding site for substrate; it reads SPE. ATP is bound by residues 100-102 and Asn109; that span reads RNE. Tyr118 contributes to the substrate binding site. 244-245 contributes to the ATP binding site; it reads EL. Glu251 lines the substrate pocket. ATP is bound at residue Gly300.

The protein belongs to the class-II aminoacyl-tRNA synthetase family. EpmA subfamily. In terms of assembly, homodimer.

It carries out the reaction D-beta-lysine + L-lysyl-[protein] + ATP = N(6)-((3R)-3,6-diaminohexanoyl)-L-lysyl-[protein] + AMP + diphosphate + H(+). Its function is as follows. With EpmB is involved in the beta-lysylation step of the post-translational modification of translation elongation factor P (EF-P). Catalyzes the ATP-dependent activation of (R)-beta-lysine produced by EpmB, forming a lysyl-adenylate, from which the beta-lysyl moiety is then transferred to the epsilon-amino group of a conserved specific lysine residue in EF-P. This chain is Elongation factor P--(R)-beta-lysine ligase, found in Citrobacter koseri (strain ATCC BAA-895 / CDC 4225-83 / SGSC4696).